Consider the following 286-residue polypeptide: tRNA (guanine-N(7)-)-methyltransferase (286 aa).

The segment at 1–21 (MTNPESTAIDPVAAMGTDHTE) is disordered. Positions 91, 116, 143, and 165 each coordinate S-adenosyl-L-methionine. Residue Asp165 is part of the active site. Substrate contacts are provided by residues Lys169, Asp201, and 262–265 (TNFE).

It belongs to the class I-like SAM-binding methyltransferase superfamily. TrmB family.

The enzyme catalyses guanosine(46) in tRNA + S-adenosyl-L-methionine = N(7)-methylguanosine(46) in tRNA + S-adenosyl-L-homocysteine. It participates in tRNA modification; N(7)-methylguanine-tRNA biosynthesis. In terms of biological role, catalyzes the formation of N(7)-methylguanine at position 46 (m7G46) in tRNA. The sequence is that of tRNA (guanine-N(7)-)-methyltransferase from Bifidobacterium longum (strain NCC 2705).